The following is a 645-amino-acid chain: DNA ligase (645 aa).

NAD(+) contacts are provided by residues 30-34 (DDEYD), 79-80 (SM), and glutamate 106. Lysine 108 (N6-AMP-lysine intermediate) is an active-site residue. NAD(+) contacts are provided by arginine 129, glutamate 163, and lysine 302. The Zn(2+) site is built by cysteine 396, cysteine 399, cysteine 412, and cysteine 417. The region spanning 570-645 (LKTNIFSGKT…IDESEYESLK (76 aa)) is the BRCT domain.

The protein belongs to the NAD-dependent DNA ligase family. LigA subfamily. Requires Mg(2+) as cofactor. The cofactor is Mn(2+).

It carries out the reaction NAD(+) + (deoxyribonucleotide)n-3'-hydroxyl + 5'-phospho-(deoxyribonucleotide)m = (deoxyribonucleotide)n+m + AMP + beta-nicotinamide D-nucleotide.. Functionally, DNA ligase that catalyzes the formation of phosphodiester linkages between 5'-phosphoryl and 3'-hydroxyl groups in double-stranded DNA using NAD as a coenzyme and as the energy source for the reaction. It is essential for DNA replication and repair of damaged DNA. The protein is DNA ligase of Campylobacter fetus subsp. fetus (strain 82-40).